Consider the following 273-residue polypeptide: MNSRVHQGHFARKRFGQNFLNDQYIIDSIVNAIHPQRGEAVVEIGPGLGALTEPVGERLDNMTVVELDRDLAARLQTHPFLGPKLTIFQQDAMTFDFAALAQEKGQPLRVFGNLPYNISTPLMFHLFSYVGAIKDMHFMLQKEVVNRLVAGPGSKAYGRLTVMAQYYCQVIPVLEVPPESFTPAPKVDSAVVRLMPYAQPPHPVNDIRALSRITTEAFGKRRKTLRNSLGHLFTVDVLAEMNIDPTLRAENITVAQYCQLANWLTAHPQPQEN.

Asn-18, Leu-20, Gly-45, Glu-66, Asp-91, and Asn-113 together coordinate S-adenosyl-L-methionine.

It belongs to the class I-like SAM-binding methyltransferase superfamily. rRNA adenine N(6)-methyltransferase family. RsmA subfamily.

It localises to the cytoplasm. The catalysed reaction is adenosine(1518)/adenosine(1519) in 16S rRNA + 4 S-adenosyl-L-methionine = N(6)-dimethyladenosine(1518)/N(6)-dimethyladenosine(1519) in 16S rRNA + 4 S-adenosyl-L-homocysteine + 4 H(+). Specifically dimethylates two adjacent adenosines (A1518 and A1519) in the loop of a conserved hairpin near the 3'-end of 16S rRNA in the 30S particle. May play a critical role in biogenesis of 30S subunits. This Erwinia tasmaniensis (strain DSM 17950 / CFBP 7177 / CIP 109463 / NCPPB 4357 / Et1/99) protein is Ribosomal RNA small subunit methyltransferase A.